We begin with the raw amino-acid sequence, 207 residues long: Large ribosomal subunit protein uL4 (207 aa).

The segment at 44–76 (KRRGTASAKTRSEVRGGGRKPWRQKGTGRARHG) is disordered. Positions 60–76 (GGRKPWRQKGTGRARHG) are enriched in basic residues.

The protein belongs to the universal ribosomal protein uL4 family. In terms of assembly, part of the 50S ribosomal subunit.

One of the primary rRNA binding proteins, this protein initially binds near the 5'-end of the 23S rRNA. It is important during the early stages of 50S assembly. It makes multiple contacts with different domains of the 23S rRNA in the assembled 50S subunit and ribosome. In terms of biological role, forms part of the polypeptide exit tunnel. This is Large ribosomal subunit protein uL4 from Natranaerobius thermophilus (strain ATCC BAA-1301 / DSM 18059 / JW/NM-WN-LF).